The primary structure comprises 450 residues: Nuclear hormone receptor family member nhr-40 (450 aa).

The nuclear receptor DNA-binding region spans 28-103 (GTLCVVCSDF…MGMDPKAIQH (76 aa)). 2 NR C4-type zinc fingers span residues 31-51 (CVVC…CNGC) and 67-91 (CQFS…LKKC). The NR LBD domain maps to 173–450 (DVKAVIEDLL…LIDQLIIVGL (278 aa)).

Belongs to the nuclear hormone receptor family. As to expression, isoform b: Expressed in body wall muscle cells, pharyngeal muscles, rectal gland cells, vulval and uterine muscles and neurons in the head and ventral nerve cord. Isoform c: Expressed in body wall muscle cells, neurons in the head, nerve ring, ventral and dorsal nerve cords and epidermal cells in the tail.

The protein localises to the nucleus. Its function is as follows. Orphan nuclear receptor. Plays a role in morphogenesis and elongation during embryonic and larval development. Plays a role in muscle formation and motility. The chain is Nuclear hormone receptor family member nhr-40 from Caenorhabditis elegans.